Reading from the N-terminus, the 193-residue chain is Ion-translocating oxidoreductase complex subunit A (193 aa).

A run of 6 helical transmembrane segments spans residues 5 to 25 (LLLLIGTVLVNNFVLVKFLGL), 39 to 59 (IGMGLATTFVLTLASVCAYLV), 67 to 87 (LGIEYLRTMSFILVIAVVVQF), 102 to 122 (LLGIFLPLITTNCAVLGVALL), 134 to 154 (IIYGFGAAVGFSLVLILFASM), and 171 to 191 (SIAMITAGLMSLAFMGFTGLV).

It belongs to the NqrDE/RnfAE family. In terms of assembly, the complex is composed of six subunits: RnfA, RnfB, RnfC, RnfD, RnfE and RnfG.

The protein resides in the cell inner membrane. Functionally, part of a membrane-bound complex that couples electron transfer with translocation of ions across the membrane. This chain is Ion-translocating oxidoreductase complex subunit A, found in Vibrio cholerae serotype O1 (strain ATCC 39315 / El Tor Inaba N16961).